A 255-amino-acid polypeptide reads, in one-letter code: Zinc import ATP-binding protein ZnuC 1 (255 aa).

The region spanning 7-220 (IRLQDVTVKI…PAFINLFGTQ (214 aa)) is the ABC transporter domain. 39 to 46 (GPNGAGKS) contributes to the ATP binding site. Residues 229–255 (HHHHDHHHHTDGTVAAGSECSHGDQHA) are disordered.

The protein belongs to the ABC transporter superfamily. Zinc importer (TC 3.A.1.15.5) family. The complex is composed of two ATP-binding proteins (ZnuC), two transmembrane proteins (ZnuB) and a solute-binding protein (ZnuA).

The protein resides in the cell inner membrane. It carries out the reaction Zn(2+)(out) + ATP(in) + H2O(in) = Zn(2+)(in) + ADP(in) + phosphate(in) + H(+)(in). Functionally, part of the ABC transporter complex ZnuABC involved in zinc import. Responsible for energy coupling to the transport system. The polypeptide is Zinc import ATP-binding protein ZnuC 1 (Hahella chejuensis (strain KCTC 2396)).